A 324-amino-acid chain; its full sequence is Beta-ketoacyl-[acyl-carrier-protein] synthase III (324 aa).

Active-site residues include Cys112 and His251. The segment at 252–256 (QANLR) is ACP-binding. The active site involves Asn281.

The protein belongs to the thiolase-like superfamily. FabH family. In terms of assembly, homodimer.

The protein localises to the cytoplasm. The catalysed reaction is malonyl-[ACP] + acetyl-CoA + H(+) = 3-oxobutanoyl-[ACP] + CO2 + CoA. The protein operates within lipid metabolism; fatty acid biosynthesis. Catalyzes the condensation reaction of fatty acid synthesis by the addition to an acyl acceptor of two carbons from malonyl-ACP. Catalyzes the first condensation reaction which initiates fatty acid synthesis and may therefore play a role in governing the total rate of fatty acid production. Possesses both acetoacetyl-ACP synthase and acetyl transacylase activities. Its substrate specificity determines the biosynthesis of branched-chain and/or straight-chain of fatty acids. The protein is Beta-ketoacyl-[acyl-carrier-protein] synthase III of Clostridium perfringens (strain 13 / Type A).